The following is a 355-amino-acid chain: Squamosa promoter-binding protein-like 15 (355 aa).

Residues 1 to 27 are disordered; that stretch reads MELLKGSGLNQTESGGSSSTESSSLSG. The span at 12–27 shows a compositional bias: low complexity; that stretch reads TESGGSSSTESSSLSG. An SBP-type zinc finger spans residues 61–138; sequence TARCQVEGCR…ACHNERRRKP (78 aa). Zn(2+)-binding residues include Cys64, Cys69, Cys86, His89, Cys105, Cys108, His112, and Cys124. The Bipartite nuclear localization signal signature appears at 121–137; sequence KRSCRRRLACHNERRRK.

The protein resides in the nucleus. Probable transcription factor required for the flowering response to vernalization in the shoot apical meristem (SAM). Defines the competence of shoot meristems to flower in response to vernalization in perennials. The protein is Squamosa promoter-binding protein-like 15 of Arabis alpina (Alpine rock-cress).